Here is a 600-residue protein sequence, read N- to C-terminus: Elongation factor 4 (600 aa).

A tr-type G domain is found at 6 to 188 (KLIRNFSIIA…AVVERIPAPK (183 aa)). GTP is bound by residues 18–23 (DHGKST) and 135–138 (NKID).

The protein belongs to the TRAFAC class translation factor GTPase superfamily. Classic translation factor GTPase family. LepA subfamily.

Its subcellular location is the cell inner membrane. It carries out the reaction GTP + H2O = GDP + phosphate + H(+). Required for accurate and efficient protein synthesis under certain stress conditions. May act as a fidelity factor of the translation reaction, by catalyzing a one-codon backward translocation of tRNAs on improperly translocated ribosomes. Back-translocation proceeds from a post-translocation (POST) complex to a pre-translocation (PRE) complex, thus giving elongation factor G a second chance to translocate the tRNAs correctly. Binds to ribosomes in a GTP-dependent manner. This is Elongation factor 4 from Sorangium cellulosum (strain So ce56) (Polyangium cellulosum (strain So ce56)).